Here is a 388-residue protein sequence, read N- to C-terminus: Zinc finger protein ubi-d4 A (388 aa).

Positions 60–190 (GPGSAPGQLY…AKGKGIGSAR (131 aa)) are disordered. Composition is skewed to basic and acidic residues over residues 97–107 (PDPEQMLKKEG) and 123–137 (DPIEKRIMPDSRDDD). Residues 156–170 (PDDFLDDLDDEDYEE) show a composition bias toward acidic residues. A C2H2-type zinc finger spans residues 205–228 (YACDICGKRYKNRPGLSYHYAHSH). Positions 233 to 264 (EGAGAEDKEDSQPPTPIMHRPEEQKSKKGPDG) are disordered. Residues 251-262 (HRPEEQKSKKGP) show a composition bias toward basic and acidic residues. PHD-type zinc fingers lie at residues 269–329 (NNYC…CKCC) and 326–376 (CKCC…CLDL).

It belongs to the requiem/DPF family.

The protein resides in the cytoplasm. It is found in the nucleus. In terms of biological role, may be a transcription factor required for the apoptosis response following survival factor withdrawal from myeloid cells. Might also have a role in the development and maturation of lymphoid cells. The chain is Zinc finger protein ubi-d4 A (req-a) from Xenopus laevis (African clawed frog).